Here is a 903-residue protein sequence, read N- to C-terminus: DNA mismatch repair protein MutS (903 aa).

Residues 1–89 (MPRSASQPPD…DEPAWGHHSQ (89 aa)) form a disordered region. Composition is skewed to low complexity over residues 20 to 36 (APEP…SEPE) and 49 to 62 (ADAA…QATA). 719-726 (GPNASGKS) provides a ligand contact to ATP.

It belongs to the DNA mismatch repair MutS family.

In terms of biological role, this protein is involved in the repair of mismatches in DNA. It is possible that it carries out the mismatch recognition step. This protein has a weak ATPase activity. This is DNA mismatch repair protein MutS from Synechococcus sp. (strain CC9605).